A 155-amino-acid polypeptide reads, in one-letter code: Endoribonuclease YbeY (155 aa).

Zn(2+) is bound by residues H114, H118, and H124.

Belongs to the endoribonuclease YbeY family. Zn(2+) serves as cofactor.

It localises to the cytoplasm. Single strand-specific metallo-endoribonuclease involved in late-stage 70S ribosome quality control and in maturation of the 3' terminus of the 16S rRNA. The sequence is that of Endoribonuclease YbeY from Escherichia coli O1:K1 / APEC.